A 145-amino-acid polypeptide reads, in one-letter code: Transcription antitermination protein NusB (145 aa).

It belongs to the NusB family.

Involved in transcription antitermination. Required for transcription of ribosomal RNA (rRNA) genes. Binds specifically to the boxA antiterminator sequence of the ribosomal RNA (rrn) operons. The sequence is that of Transcription antitermination protein NusB from Burkholderia lata (strain ATCC 17760 / DSM 23089 / LMG 22485 / NCIMB 9086 / R18194 / 383).